Consider the following 394-residue polypeptide: Probable fimbrial assembly protein FimD, serogroup H1 (394 aa).

The chain is Probable fimbrial assembly protein FimD, serogroup H1 (fimD) from Dichelobacter nodosus (Bacteroides nodosus).